Consider the following 509-residue polypeptide: Maturase K (509 aa).

Belongs to the intron maturase 2 family. MatK subfamily.

The protein resides in the plastid. Its subcellular location is the chloroplast. In terms of biological role, usually encoded in the trnK tRNA gene intron. Probably assists in splicing its own and other chloroplast group II introns. The sequence is that of Maturase K from Nicotiana rustica (Aztec tobacco).